The chain runs to 2102 residues: MKYQLSILGDESRLDPTTFNAFTVYMVNVTNLMTNRQWNIYRRYSQFHELDSEIKSAFPKIKLPKLPKKYIFKNSTNRELVEERKLLLQKYLKDLVKHEQIEDSDCLINWLVPQNEPAFTSLNNPDKSGYLIKEGHVIRSWKKRYFVLKDGLIYYFKHQSDQEPTGMIPVIGSQIKRIGETERKFSFQIIPKNETFFPTFSIQARDEQDCNDWIKAIELSQQHFQDQEQYRKQEEEERQKKNNGARIKKSGSFEFSTLTSASAPTSPVQSSSSTSNMLPSSYQFSSDGSNNNSVCSSIGALGPNNSNNNNNNNNNSYYYSHSSNNHNHYNHHNNNHNNSHHHHHHHNGLNRGSSQVSLSVNTTSSNSSGSSSSTSLSRRHPPQKSKSDLNLSSVLHSNIRIGIDESDELYILNNSISNENLSSMLEQPGSYQQPQHQQGGGGGGGGGGGNIVNNLPPLSLTQRHISNLSSRSNSNSSGSSSGSGSSSGSGPIGSGGVGGGLNQPVKTSSQQPHHRKSNSSNNPSYISHLHYLQPSNSSSSISSSSSSSSASSASSASPFSSLFTTINQYFNPKSNLPYSPPSSPILNANNNNNNNNNNNNNNNNNNNNDFNLNNNNNNNNNNNNGNTASGSSCNTTPNLLPAPTNVSPIQNRARSSPMTSLPLPNNLLIPIPVFSLNDEYNNINNNNSNIESNNNNNNNNNNNNNNNNNNNNNNNNNNNNNNNNNNNNNNNNNNNTTELVNNNIESNDNDNNNSNNNNNNNNNSNNSLDLINKPLVKIIEPKKKEKKSKSKSKVASISDFITSKKKEKDKEKEKDKEKEKEKEIGGNISTSTTPNKKNGTLRSRALTLPVKPNDSILGTTPHHNHQNNHHHHGDISSINIIREKFISKTTRFSSDGKPRFDINQKLVSTKLSVDKKIRNFIEVVIDDIDHEATSGGNLQKQQHTQLIANDIKKLANTVLNMSVYDQREKNTQIVQSIQTLFATAISNKEMTSLVSKFLFIFSEFSRVVDVLNPVEKNLTNVINKQLQSQQQQQKQNETTGTTTGTAGSSVNPLSFSSNSILVQQKRLSRSLQSFNEINHHYSSSYHEPIIYSSSLNQYNGINIGSGTPTTTSGDNTPLTNTATSSTVSSYSEPSLISSQNQLPLSQQPQPQPQQQQQLNDSSSFPTSPISSRNDLISSNSSIYEPPLSDVASQLIEQQQEQQQQQHQEQPLQPQQQQQQQPQPQPISTLVFDKANQRSSSPILEKKSILTDLLKENYQKETTNNNGIGNMIILSEYDKKLQKQQLYPNQHVIITEEMRNKPERSFVCRICEDTYTQSQLAKHTPFCALTNKHDFKNHSSHDERLYSILNLVKGIICDSFASPNNSEQYSYLIDDEIISQLGQQLEYLFNIPYGPVESPKQCQDVINRVQAIIDENSTDMALHVFGKRICKIIEEKKALFVQYSKFQNAAQTTTSKGKKWSMWGIIPFIKDIIPSPSSKVDSSSSSQISSPILSSPPPPMKQPPPQVIVPPSSLTTSSNTTSISIADFEIIKPISRGAFGRVYLAQKKKTGDLYAIKVLKKLDTIRKNMVNHVIVERNILAMVQNEFVVKLFYAFQSTDKLYLVMEYLIGGDCASLLRALGCFEEHMAKHYIAETVLCLEYLHKSAIVHRDLKPDNMLIDGLGHIKLTDFGLSKIGIIDDKKMEDSGNTNTNTHFNFSTSPTNTSMMDDSSTTGNPNGNGNTSLNSSQTNILSPYPQRKNTLKTPLKKPVKKVVGTPDYLSPEILLGTGHGQTVDWWALGIILYEFLTGSPPFNDDTPELIFQHILHRDREMEWPEEISSEAKDLILKLLNPDPYKRLGANGAYEVKTHPFFANVNWDTLIDQEMDNIFLPKPENNYDTDYFWDRQSMYDDEAEDDFLTINQSQPQHQSQHQSQPQSQPQPQSQNLGQNNNNSESNNNNNNSNSNVSGQNINNSVSSSSNNNGSGNLNNICNNSNVNANNNNSNGNLGNNNNNKNNNINNDNDKNKNNNSNVQNNNNNNNNNILQQSSSPSSTSSSLSNSSNNNHNGGRQINNSKDSDNSIGGGKNNSKIEDIEKDPITFGNFSFTNINHLKDMNNFFLKNKS.

The region spanning 1 to 118 (MKYQLSILGD…NWLVPQNEPA (118 aa)) is the PX domain. A PH domain is found at 124 to 222 (NPDKSGYLIK…WIKAIELSQQ (99 aa)). Basic and acidic residues predominate over residues 225–240 (QDQEQYRKQEEEERQK). 9 disordered regions span residues 225–289 (QDQE…SDGS), 302–390 (GPNN…SDLN), 426–558 (EQPG…SASP), 574–665 (SNLP…PLPN), 685–768 (NNNS…NNSL), 804–842 (KKKE…GTLR), 1029–1051 (QQQQ…SSVN), 1106–1224 (GTPT…PQPQ), and 1476–1514 (SSKV…SSLT). Composition is skewed to low complexity over residues 256-281 (STLT…LPSS) and 304-327 (NNSN…NNHN). Over residues 328–348 (HYNHHNNNHNNSHHHHHHHNG) the composition is skewed to basic residues. Low complexity-rich tracts occupy residues 353–376 (SSQV…STSL) and 426–437 (EQPGSYQQPQHQ). The segment covering 438–450 (QGGGGGGGGGGGN) has biased composition (gly residues). A compositionally biased stretch (low complexity) spans 466–484 (SNLSSRSNSNSSGSSSGSG). The span at 485–501 (SSSGSGPIGSGGVGGGL) shows a compositional bias: gly residues. 2 stretches are compositionally biased toward low complexity: residues 535-558 (SNSS…SASP) and 587-626 (NANN…NNGN). A compositionally biased stretch (polar residues) spans 627–659 (TASGSSCNTTPNLLPAPTNVSPIQNRARSSPMT). Residues 804 to 824 (KKKEKDKEKEKDKEKEKEKEI) are compositionally biased toward basic and acidic residues. A compositionally biased stretch (polar residues) spans 827–841 (NISTSTTPNKKNGTL). A compositionally biased stretch (polar residues) spans 1106 to 1118 (GTPTTTSGDNTPL). Composition is skewed to low complexity over residues 1119–1182 (TNTA…NSSI), 1196–1221 (EQQQ…QQQP), and 1476–1492 (SSKV…SPIL). The span at 1493 to 1507 (SSPPPPMKQPPPQVI) shows a compositional bias: pro residues. The region spanning 1527–1851 (FEIIKPISRG…AYEVKTHPFF (325 aa)) is the Protein kinase domain. ATP contacts are provided by residues 1533 to 1541 (ISRGAFGRV) and lysine 1556. Aspartate 1650 acts as the Proton acceptor in catalysis. Low complexity-rich tracts occupy residues 1687–1729 (NTNT…SQTN), 1902–1999 (SQPQ…NINN), and 2006–2052 (NNNS…QINN). Disordered regions lie at residues 1687–1741 (NTNT…KNTL) and 1902–2070 (SQPQ…SKIE). In terms of domain architecture, AGC-kinase C-terminal spans 1852–1911 (ANVNWDTLIDQEMDNIFLPKPENNYDTDYFWDRQSMYDDEAEDDFLTINQSQPQHQSQHQ).

The protein belongs to the protein kinase superfamily. AGC Ser/Thr protein kinase family.

The enzyme catalyses L-seryl-[protein] + ATP = O-phospho-L-seryl-[protein] + ADP + H(+). It carries out the reaction L-threonyl-[protein] + ATP = O-phospho-L-threonyl-[protein] + ADP + H(+). In Dictyostelium discoideum (Social amoeba), this protein is Probable serine/threonine-protein kinase DDB_G0272282.